The following is a 394-amino-acid chain: Phosphoglycerate kinase (394 aa).

Substrate contacts are provided by residues aspartate 21–asparagine 23, arginine 36, histidine 59–arginine 62, arginine 118, and arginine 151. At serine 183 the chain carries Phosphoserine. Positions 201 and 292 each coordinate ATP. Threonine 299 carries the phosphothreonine modification. Residues glutamate 323 and glycine 350 to serine 353 contribute to the ATP site.

Belongs to the phosphoglycerate kinase family. Monomer.

Its subcellular location is the cytoplasm. The catalysed reaction is (2R)-3-phosphoglycerate + ATP = (2R)-3-phospho-glyceroyl phosphate + ADP. The protein operates within carbohydrate degradation; glycolysis; pyruvate from D-glyceraldehyde 3-phosphate: step 2/5. The chain is Phosphoglycerate kinase from Anoxybacillus flavithermus (strain DSM 21510 / WK1).